Consider the following 634-residue polypeptide: Chaperone protein HtpG (634 aa).

Residues 1 to 339 (MAQETMSFQA…SADLPLNVSR (339 aa)) form an a; substrate-binding region. Residues 340 to 559 (EILQESRDVK…DGEMSGYLQR (220 aa)) are b. The interval 560–634 (MLKAAGQQAP…ALLLARANEA (75 aa)) is c.

It belongs to the heat shock protein 90 family. As to quaternary structure, homodimer.

Its subcellular location is the cytoplasm. Molecular chaperone. Has ATPase activity. This is Chaperone protein HtpG from Paraburkholderia xenovorans (strain LB400).